Consider the following 266-residue polypeptide: Thiazole synthase (266 aa).

The active-site Schiff-base intermediate with DXP is the lysine 110. 1-deoxy-D-xylulose 5-phosphate-binding positions include glycine 171, 197-198 (AG), and 219-220 (AT).

This sequence belongs to the ThiG family. Homotetramer. Forms heterodimers with either ThiH or ThiS.

It localises to the cytoplasm. It catalyses the reaction [ThiS sulfur-carrier protein]-C-terminal-Gly-aminoethanethioate + 2-iminoacetate + 1-deoxy-D-xylulose 5-phosphate = [ThiS sulfur-carrier protein]-C-terminal Gly-Gly + 2-[(2R,5Z)-2-carboxy-4-methylthiazol-5(2H)-ylidene]ethyl phosphate + 2 H2O + H(+). It functions in the pathway cofactor biosynthesis; thiamine diphosphate biosynthesis. Functionally, catalyzes the rearrangement of 1-deoxy-D-xylulose 5-phosphate (DXP) to produce the thiazole phosphate moiety of thiamine. Sulfur is provided by the thiocarboxylate moiety of the carrier protein ThiS. In vitro, sulfur can be provided by H(2)S. The protein is Thiazole synthase of Thermobifida fusca (strain YX).